Reading from the N-terminus, the 46-residue chain is Thymosin beta-a (46 aa).

A compositionally biased stretch (polar residues) spans 21–30; it reads TNTAEKNTLP. A disordered region spans residues 21–46; the sequence is TNTAEKNTLPTKEDIDQEKKAAEGGK. Basic and acidic residues predominate over residues 31-46; sequence TKEDIDQEKKAAEGGK.

Belongs to the thymosin beta family.

Its subcellular location is the cytoplasm. It localises to the cytoskeleton. In terms of biological role, plays an important role in the organization of the cytoskeleton. Binds to and sequesters actin monomers (G actin) and therefore inhibits actin polymerization. In Cyprinus carpio (Common carp), this protein is Thymosin beta-a.